A 67-amino-acid chain; its full sequence is U-myrmeciitoxin(01)-Mg4a (67 aa).

A signal peptide spans Met1–Gly25.

It belongs to the ant myrmeciitoxin-01 family. In terms of assembly, homodimer; disulfide-linked. In terms of processing, contains 2 intrachain disulfide bonds (one per chain) and 1 interchain disulfide bond. In terms of tissue distribution, expressed by the venom gland.

It localises to the secreted. This is U-myrmeciitoxin(01)-Mg4a from Myrmecia gulosa (Red bulldog ant).